Consider the following 461-residue polypeptide: Putative ankyrin repeat protein FPV218 (461 aa).

ANK repeat units lie at residues Met1–Ser28, Lys31–Asn61, Glu65–Leu94, Pro96–Val116, Glu120–Val149, Lys153–Ile182, Leu186–Ile213, Asn217–Asn248, Cys250–Ile277, Cys281–Glu312, Asn358–Tyr385, and Leu431–Lys460.

This is Putative ankyrin repeat protein FPV218 from Fowlpox virus (strain NVSL) (FPV).